Here is a 208-residue protein sequence, read N- to C-terminus: FMN-dependent NADH:quinone oxidoreductase (208 aa).

FMN is bound by residues histidine 10, 17 to 19, 104 to 107, 148 to 153, and aspartate 184; these read SRS, MWNL, and SNGGFY.

It belongs to the azoreductase type 1 family. As to quaternary structure, homodimer. FMN serves as cofactor.

It carries out the reaction 2 a quinone + NADH + H(+) = 2 a 1,4-benzosemiquinone + NAD(+). The catalysed reaction is N,N-dimethyl-1,4-phenylenediamine + anthranilate + 2 NAD(+) = 2-(4-dimethylaminophenyl)diazenylbenzoate + 2 NADH + 2 H(+). Its function is as follows. Quinone reductase that provides resistance to thiol-specific stress caused by electrophilic quinones. Functionally, also exhibits azoreductase activity. Catalyzes the reductive cleavage of the azo bond in aromatic azo compounds to the corresponding amines. Requires NADH, but not NADPH, as an electron donor for its activity. The enzyme can also reduce a wide range of sulfonated azo dyes. The substrate preference order is methyl Red &gt; Orange II &gt; Ponceau BS &gt; Ponceau S &gt; Orange G &gt; Amaranth. The sequence is that of FMN-dependent NADH:quinone oxidoreductase from Enterococcus faecalis (strain ATCC 700802 / V583).